Reading from the N-terminus, the 595-residue chain is MRFAYLATLAGSLLAGLAQAVKVNPLPAPQHIKWGESGPQYLDWNVKYSGPRDRTIIAAWRRTWGSIVQLRWTPAALEAPIPTFAPFIVGNGKRDAHSNRRILRVSVKVENTNVDLQHGVDESYTLQIRDKSDSIRITAKTTWGVLRAFTTLQQIVIFKRGRFLVEQPVDIKDYPLYPVRGIMIDTARNFISVKKIFEQLDGMALSKLNVLHWHITDTQSWPVEVRSYPQMTEDAYSRRETYGPSDIRKVIEYARARGIRVVPEIDMPGHSASGWRKIDPDIVACADSWWSNDDWEKHTAVQPNPGQLDIANNKTYKVVEKVYNDISRIFTDDWFHVGGDELQPNCFLTSKIVRDWLKQGSRTFNDLLQHWVDKTVPMMKKVKKNRRLLMWEDVLLSGNMHAHRVPRDIIMQSWNGGLANIKKLTARGYEVIVSSADFLYLDCGYGGWVGNDPRYNVMENPDPETPNFNYGGNGGSWCGPYKTWQRIYNYDFTDGLNYAEKKRVIGAIAPLWSEQADDVVISNKMWPRAAALAELVWSGNVGKDGKKRTTLMTQRILNFREYLVANGIMAAPLQPKYCLKHPHSCDLYYDQTVIM.

A signal peptide spans 1-20; that stretch reads MRFAYLATLAGSLLAGLAQA. The N-linked (GlcNAc...) asparagine glycan is linked to N313.

Belongs to the glycosyl hydrolase 20 family.

The catalysed reaction is Hydrolysis of terminal non-reducing N-acetyl-D-hexosamine residues in N-acetyl-beta-D-hexosaminides.. Its function is as follows. Beta-hexosaminidase that shows a broad substrate specificity. This is Beta-hexosaminidase 1 from Coccidioides posadasii (strain RMSCC 757 / Silveira) (Valley fever fungus).